Consider the following 172-residue polypeptide: MEFFNVGKIVNTQGLQGEMRVLSVSDFADERYRKGSQLALFDEKDHFYSEVEIASHRRQKNFDIIKFKGMNHINDIEKFKGFTLKVSQQHLSDLDEGEFYYHQIIGLEVYENDVYIGTIKEILQPGANDVWVVKRQGKKDLLLPFIPPVVLNVDVEANRVDVAIMEGLDDED.

The PRC barrel domain occupies 95–168 (DEGEFYYHQI…RVDVAIMEGL (74 aa)).

This sequence belongs to the RimM family. In terms of assembly, binds ribosomal protein uS19.

It localises to the cytoplasm. An accessory protein needed during the final step in the assembly of 30S ribosomal subunit, possibly for assembly of the head region. Essential for efficient processing of 16S rRNA. May be needed both before and after RbfA during the maturation of 16S rRNA. It has affinity for free ribosomal 30S subunits but not for 70S ribosomes. The chain is Ribosome maturation factor RimM from Streptococcus uberis (strain ATCC BAA-854 / 0140J).